We begin with the raw amino-acid sequence, 635 residues long: Early transcription factor 70 kDa subunit (635 aa).

In terms of domain architecture, Helicase ATP-binding spans 32–185 (RSIIDENKSV…SNIISLMSDE (154 aa)). Residue 45 to 52 (HIMGSGKT) participates in ATP binding. A DEXH box motif is present at residues 135-138 (DEAH). Positions 326 to 505 (KFKYFIGKIT…TLPFDIKKLL (180 aa)) constitute a Helicase C-terminal domain.

This sequence belongs to the helicase family. VETF subfamily. In terms of assembly, heterodimer of a 70 kDa and a 82 kDa subunit.

It localises to the virion. Acts with RNA polymerase to initiate transcription from early gene promoters. A DNA-dependent ATPase activity is associated with VETF. The chain is Early transcription factor 70 kDa subunit (VETFS) from Erythrocebus patas (Red guenon).